A 101-amino-acid chain; its full sequence is Small ribosomal subunit protein uS14 (101 aa).

The protein belongs to the universal ribosomal protein uS14 family. In terms of assembly, part of the 30S ribosomal subunit. Contacts proteins S3 and S10.

In terms of biological role, binds 16S rRNA, required for the assembly of 30S particles and may also be responsible for determining the conformation of the 16S rRNA at the A site. In Chelativorans sp. (strain BNC1), this protein is Small ribosomal subunit protein uS14.